Consider the following 828-residue polypeptide: Periplasmic nitrate reductase (828 aa).

Positions 1-31 (MKLSRRSFMKANAVAAVAAAAGLSVPGVARA) form a signal peptide, tat-type signal. Positions 39–95 (IKWDKAPCRFCGTGCGVLVGTQQGRVVACQGDPDAPVNRGLNCIKGYFLPKIMYGKD) constitute a 4Fe-4S Mo/W bis-MGD-type domain. Cysteine 46, cysteine 49, cysteine 53, and cysteine 81 together coordinate [4Fe-4S] cluster. Residues lysine 83, glutamine 150, asparagine 175, cysteine 179, 212 to 219 (WGANMAEM), 243 to 247 (STYQH), 262 to 264 (QSD), methionine 372, glutamine 376, asparagine 482, 508 to 509 (SD), lysine 531, aspartate 558, and 718 to 727 (TGRVLEHWHT) contribute to the Mo-bis(molybdopterin guanine dinucleotide) site. Phenylalanine 794 provides a ligand contact to substrate. Residues asparagine 802 and lysine 819 each contribute to the Mo-bis(molybdopterin guanine dinucleotide) site.

The protein belongs to the prokaryotic molybdopterin-containing oxidoreductase family. NasA/NapA/NarB subfamily. As to quaternary structure, component of the periplasmic nitrate reductase NapAB complex composed of NapA and NapB. [4Fe-4S] cluster serves as cofactor. It depends on Mo-bis(molybdopterin guanine dinucleotide) as a cofactor. Predicted to be exported by the Tat system. The position of the signal peptide cleavage has not been experimentally proven.

The protein localises to the periplasm. It carries out the reaction 2 Fe(II)-[cytochrome] + nitrate + 2 H(+) = 2 Fe(III)-[cytochrome] + nitrite + H2O. Catalytic subunit of the periplasmic nitrate reductase complex NapAB. Receives electrons from NapB and catalyzes the reduction of nitrate to nitrite. In Shigella boydii serotype 4 (strain Sb227), this protein is Periplasmic nitrate reductase.